The chain runs to 253 residues: Ribosome maturation factor RimP (253 aa).

Residues 186–199 (RRGKAAEREKKRDL) are compositionally biased toward basic and acidic residues. The interval 186–253 (RRGKAAEREK…RARRGEIDPD (68 aa)) is disordered. Low complexity predominate over residues 201–216 (LAPPLAPHAKPAAQAK). The segment covering 240–253 (LAADRARRGEIDPD) has biased composition (basic and acidic residues).

This sequence belongs to the RimP family.

Its subcellular location is the cytoplasm. Required for maturation of 30S ribosomal subunits. In Bradyrhizobium sp. (strain BTAi1 / ATCC BAA-1182), this protein is Ribosome maturation factor RimP.